The chain runs to 76 residues: Esculentin-2MT1 (76 aa).

An N-terminal signal peptide occupies residues 1–22; sequence MFTMKKPLLLLFFLGTISLSLC. Residues 23–37 constitute a propeptide that is removed on maturation; the sequence is EEERNADEDDGEKEV. A disulfide bond links Cys-70 and Cys-76.

It belongs to the frog skin active peptide (FSAP) family. Esculentin subfamily. Expressed by the skin glands.

It is found in the secreted. Its function is as follows. Antimicrobial peptide. The chain is Esculentin-2MT1 from Amolops mantzorum (Sichuan torrent frog).